The chain runs to 394 residues: Metal tolerance protein 11 (394 aa).

Residues 1 to 103 lie on the Cytoplasmic side of the membrane; the sequence is MVEPASPDSD…EQDNLAKSET (103 aa). A helical membrane pass occupies residues 104–124; it reads LAIRISNIANMLLFAAKVYAS. Topologically, residues 125–130 are vacuolar; the sequence is VTSGSL. A helical membrane pass occupies residues 131–151; it reads AIIASTLDSLLDLLSGFILWF. Residues 152–172 lie on the Cytoplasmic side of the membrane; the sequence is TAFSMQTPNPYQYPIGKKRMQ. A helical transmembrane segment spans residues 173–193; the sequence is PLGILVFASVMATLGLQIILE. Residues 194-212 lie on the Vacuolar side of the membrane; it reads SLRTMLSSHKEFNLTKEQE. Residues 213 to 233 form a helical membrane-spanning segment; it reads SWVVGIMLSVTLVKLLLVLYC. Residues 234–251 lie on the Cytoplasmic side of the membrane; it reads RSFTNEIVKAYAQDHFFD. A helical transmembrane segment spans residues 252–272; it reads VITNIIGLIAVILANYIDYWI. Residue Asp-273 is a topological domain, vacuolar. Residues 274 to 294 traverse the membrane as a helical segment; it reads PVGAIILALYTIRTWSMTVLE. The Cytoplasmic segment spans residues 295–394; sequence NVNSLVGKSA…HKPEHARSHC (100 aa).

It belongs to the cation diffusion facilitator (CDF) transporter (TC 2.A.4) family. SLC30A subfamily. As to expression, widely expressed.

Its subcellular location is the prevacuolar compartment membrane. The protein localises to the golgi apparatus membrane. In terms of biological role, cation/proton antiporter involved in endogenous manganese tolerance probably through vesicular trafficking and exocytosis. The protein is Metal tolerance protein 11 (MTP11) of Arabidopsis thaliana (Mouse-ear cress).